Consider the following 160-residue polypeptide: NADH-quinone oxidoreductase subunit B (160 aa).

The [4Fe-4S] cluster site is built by cysteine 37, cysteine 38, cysteine 102, and cysteine 132.

This sequence belongs to the complex I 20 kDa subunit family. As to quaternary structure, NDH-1 is composed of 14 different subunits. Subunits NuoB, C, D, E, F, and G constitute the peripheral sector of the complex. [4Fe-4S] cluster is required as a cofactor.

It localises to the cell membrane. The enzyme catalyses a quinone + NADH + 5 H(+)(in) = a quinol + NAD(+) + 4 H(+)(out). In terms of biological role, NDH-1 shuttles electrons from NADH, via FMN and iron-sulfur (Fe-S) centers, to quinones in the respiratory chain. Couples the redox reaction to proton translocation (for every two electrons transferred, four hydrogen ions are translocated across the cytoplasmic membrane), and thus conserves the redox energy in a proton gradient. This chain is NADH-quinone oxidoreductase subunit B, found in Polynucleobacter asymbioticus (strain DSM 18221 / CIP 109841 / QLW-P1DMWA-1) (Polynucleobacter necessarius subsp. asymbioticus).